Reading from the N-terminus, the 261-residue chain is 14-3-3-like protein A (261 aa).

The protein belongs to the 14-3-3 family.

The polypeptide is 14-3-3-like protein A (Vicia faba (Broad bean)).